The sequence spans 364 residues: Ribosomal RNA large subunit methyltransferase F (364 aa).

The interval Met-1–Ala-30 is disordered.

This sequence belongs to the methyltransferase superfamily. METTL16/RlmF family.

Its subcellular location is the cytoplasm. It carries out the reaction adenosine(1618) in 23S rRNA + S-adenosyl-L-methionine = N(6)-methyladenosine(1618) in 23S rRNA + S-adenosyl-L-homocysteine + H(+). Specifically methylates the adenine in position 1618 of 23S rRNA. This is Ribosomal RNA large subunit methyltransferase F from Vibrio vulnificus (strain CMCP6).